Consider the following 146-residue polypeptide: Phospholipase A2 OS2 (146 aa).

Positions 1–27 (MHPAHLLVLLAVCVSLLGASDIPPLPL) are cleaved as a signal peptide. 7 disulfide bridges follow: Cys-38/Cys-99, Cys-54/Cys-145, Cys-56/Cys-72, Cys-71/Cys-126, Cys-78/Cys-119, Cys-88/Cys-112, and Cys-106/Cys-117. Residues Tyr-55, Gly-57, and Gly-59 each coordinate Ca(2+). His-75 is a catalytic residue. Asp-76 contacts Ca(2+). Asp-120 is a catalytic residue.

This sequence belongs to the phospholipase A2 family. Group I subfamily. D49 sub-subfamily. Monomer. It depends on Ca(2+) as a cofactor. In terms of tissue distribution, expressed by the venom gland.

The protein localises to the secreted. The catalysed reaction is a 1,2-diacyl-sn-glycero-3-phosphocholine + H2O = a 1-acyl-sn-glycero-3-phosphocholine + a fatty acid + H(+). Functionally, snake venom phospholipase A2 (PLA2) that shows high presynaptic neurotoxicity in vertebrata that is independent of catalytic activity, as well as local myotoxicity when intramuscularly injected into mice. Blocks acetylcholine release in Aplysia neurons, and potentiates pro-inflammatory cellular signaling. Potentiates glutamate excitoxicity when coinjected into brain of rats. May act by binding in a calcium-dependent fashion and with high affinity to a neuronal-type (N-type) PLA2 receptor, and with very high affinity to a muscle-type (M-type) PLA2 receptor. In vitro, shows a high-specific activity on E.coli membranes and is more efficient on the anionic phospholipid POPG than on the anionic phospholipid POPS or the zwitterionic phospholipid POPC. Exerts catalytically-independent anti-HIV (IC(50) is 35 nM) activity and catalytically-dependent antimalarial activity (IC(50) is 3.1 nM when tested on P.falciparum grown in serum that contains lipoproteins). PLA2 catalyzes the calcium-dependent hydrolysis of the 2-acyl groups in 3-sn-phosphoglycerides. The sequence is that of Phospholipase A2 OS2 from Oxyuranus scutellatus scutellatus (Australian taipan).